The primary structure comprises 503 residues: Probable cytosol aminopeptidase (503 aa).

Mn(2+) contacts are provided by lysine 274 and aspartate 279. Lysine 286 is an active-site residue. Positions 297, 356, and 358 each coordinate Mn(2+). Residue arginine 360 is part of the active site.

Belongs to the peptidase M17 family. It depends on Mn(2+) as a cofactor.

It is found in the cytoplasm. The catalysed reaction is Release of an N-terminal amino acid, Xaa-|-Yaa-, in which Xaa is preferably Leu, but may be other amino acids including Pro although not Arg or Lys, and Yaa may be Pro. Amino acid amides and methyl esters are also readily hydrolyzed, but rates on arylamides are exceedingly low.. It carries out the reaction Release of an N-terminal amino acid, preferentially leucine, but not glutamic or aspartic acids.. In terms of biological role, presumably involved in the processing and regular turnover of intracellular proteins. Catalyzes the removal of unsubstituted N-terminal amino acids from various peptides. In Burkholderia multivorans (strain ATCC 17616 / 249), this protein is Probable cytosol aminopeptidase.